The sequence spans 87 residues: DNA-directed RNA polymerase subunit Rpo5 (87 aa).

Belongs to the archaeal Rpo5/eukaryotic RPB5 RNA polymerase subunit family. Part of the RNA polymerase complex.

The protein localises to the cytoplasm. The enzyme catalyses RNA(n) + a ribonucleoside 5'-triphosphate = RNA(n+1) + diphosphate. DNA-dependent RNA polymerase (RNAP) catalyzes the transcription of DNA into RNA using the four ribonucleoside triphosphates as substrates. The chain is DNA-directed RNA polymerase subunit Rpo5 from Thermoplasma volcanium (strain ATCC 51530 / DSM 4299 / JCM 9571 / NBRC 15438 / GSS1).